Reading from the N-terminus, the 398-residue chain is 1-deoxy-D-xylulose 5-phosphate reductoisomerase (398 aa).

The NADPH site is built by threonine 21, glycine 22, serine 23, isoleucine 24, glycine 47, asparagine 50, and asparagine 127. Lysine 128 contributes to the 1-deoxy-D-xylulose 5-phosphate binding site. Glutamate 129 is an NADPH binding site. Residue aspartate 151 coordinates Mn(2+). Residues serine 152, glutamate 153, serine 177, and histidine 200 each contribute to the 1-deoxy-D-xylulose 5-phosphate site. Residue glutamate 153 coordinates Mn(2+). Glycine 206 serves as a coordination point for NADPH. Positions 213, 218, 219, and 222 each coordinate 1-deoxy-D-xylulose 5-phosphate. Position 222 (glutamate 222) interacts with Mn(2+).

This sequence belongs to the DXR family. Requires Mg(2+) as cofactor. The cofactor is Mn(2+).

The enzyme catalyses 2-C-methyl-D-erythritol 4-phosphate + NADP(+) = 1-deoxy-D-xylulose 5-phosphate + NADPH + H(+). The protein operates within isoprenoid biosynthesis; isopentenyl diphosphate biosynthesis via DXP pathway; isopentenyl diphosphate from 1-deoxy-D-xylulose 5-phosphate: step 1/6. Its function is as follows. Catalyzes the NADPH-dependent rearrangement and reduction of 1-deoxy-D-xylulose-5-phosphate (DXP) to 2-C-methyl-D-erythritol 4-phosphate (MEP). The protein is 1-deoxy-D-xylulose 5-phosphate reductoisomerase of Mycolicibacterium smegmatis (strain ATCC 700084 / mc(2)155) (Mycobacterium smegmatis).